Reading from the N-terminus, the 189-residue chain is ER membrane protein complex subunit 4 (189 aa).

Residues 1–11 (MTSSAGQGGGA) are compositionally biased toward gly residues. Disordered regions lie at residues 1–20 (MTSSAGQGGGALSTRGGAAT) and 30–63 (SLGNSRSRSDRQGKDGDVMYPVGYSDKPVPDTSV). Topologically, residues 1–72 (MTSSAGQGGG…VQEADRNLVE (72 aa)) are cytoplasmic. A compositionally biased stretch (basic and acidic residues) spans 36–46 (SRSDRQGKDGD). The helical transmembrane segment at 73-93 (KRCWDVALGPLKQIPMNLFIM) threads the bilayer. Topologically, residues 94–104 (YMSGNTISIFP) are lumenal. Residues 105–126 (IMMVCMMAWRPIQALMSMSATF) traverse the membrane as a helical segment. At 127–133 (KLLESSS) the chain is on the cytoplasmic side. The helical transmembrane segment at 134-154 (QQWLQGLVYLIGNLLGSALAI) threads the bilayer. Topologically, residues 155–189 (YKCQSMGLLPTHSSDWLAFIEPPQRLEIMGGGMVM) are lumenal.

The protein belongs to the EMC4 family. Component of the ER membrane protein complex (EMC).

The protein localises to the endoplasmic reticulum membrane. Functionally, part of the endoplasmic reticulum membrane protein complex (EMC) that enables the energy-independent insertion into endoplasmic reticulum membranes of newly synthesized membrane proteins. Preferentially accommodates proteins with transmembrane domains that are weakly hydrophobic or contain destabilizing features such as charged and aromatic residues. Involved in the cotranslational insertion of multi-pass membrane proteins in which stop-transfer membrane-anchor sequences become ER membrane spanning helices. It is also required for the post-translational insertion of tail-anchored/TA proteins in endoplasmic reticulum membranes. By mediating the proper cotranslational insertion of N-terminal transmembrane domains in an N-exo topology, with translocated N-terminus in the lumen of the ER, controls the topology of multi-pass membrane proteins like the G protein-coupled receptors. By regulating the insertion of various proteins in membranes, it is indirectly involved in many cellular processes. This is ER membrane protein complex subunit 4 (emc4) from Danio rerio (Zebrafish).